A 174-amino-acid chain; its full sequence is Transcription factor bHLH168 (174 aa).

The bHLH domain occupies 14–63 (SLREQRNLREKERRMRMKHLFSILSSHVSPTRRLPVPQLIDQAVSYMIQL).

Belongs to the bHLH protein family.

The protein localises to the nucleus. In Arabidopsis thaliana (Mouse-ear cress), this protein is Transcription factor bHLH168.